The sequence spans 324 residues: UPF0158 protein CPn_0518/CP_0235/CPj0518/CpB0539 (324 aa).

Belongs to the UPF0158 family.

The polypeptide is UPF0158 protein CPn_0518/CP_0235/CPj0518/CpB0539 (Chlamydia pneumoniae (Chlamydophila pneumoniae)).